The sequence spans 102 residues: Putative pterin-4-alpha-carbinolamine dehydratase (102 aa).

Belongs to the pterin-4-alpha-carbinolamine dehydratase family.

The enzyme catalyses (4aS,6R)-4a-hydroxy-L-erythro-5,6,7,8-tetrahydrobiopterin = (6R)-L-erythro-6,7-dihydrobiopterin + H2O. The sequence is that of Putative pterin-4-alpha-carbinolamine dehydratase from Burkholderia multivorans (strain ATCC 17616 / 249).